Here is a 166-residue protein sequence, read N- to C-terminus: Disulfide bond formation protein B (166 aa).

At 1 to 11 the chain is on the cytoplasmic side; that stretch reads MQSFAFSTRAL. A helical membrane pass occupies residues 12-28; it reads FLGLFAVCAGLLGFGLY. The Periplasmic portion of the chain corresponds to 29–46; it reads LQHAVGLEPCPMCIMQRY. Cys38 and Cys41 are oxidised to a cystine. Residues 47–63 traverse the membrane as a helical segment; that stretch reads AFVAIALTALVAGLHGP. Residues 64–70 are Cytoplasmic-facing; that stretch reads GRRGTRA. Residues 71–87 traverse the membrane as a helical segment; that stretch reads YAAVILLLALAGGGVAL. The Periplasmic segment spans residues 88–143; it reads RQTWMQLYPPEFAECGPDLEFMLGSFPLADALPMIFQGAGDCSKVDWAFLGLSIAN. A disulfide bond links Cys102 and Cys129. Residues 144–162 traverse the membrane as a helical segment; the sequence is WSLVCLTLVAVFAIMMIAR. Over 163–166 the chain is Cytoplasmic; that stretch reads KRGG.

It belongs to the DsbB family.

It localises to the cell inner membrane. Required for disulfide bond formation in some periplasmic proteins. Acts by oxidizing the DsbA protein. The sequence is that of Disulfide bond formation protein B from Aromatoleum aromaticum (strain DSM 19018 / LMG 30748 / EbN1) (Azoarcus sp. (strain EbN1)).